A 444-amino-acid polypeptide reads, in one-letter code: Deoxyguanosinetriphosphate triphosphohydrolase-like protein (444 aa).

The disordered stretch occupies residues 1-26 (MIASPWHERRLNEDKKRRNDHRSPFQ). One can recognise an HD domain in the interval 59 to 250 (RLTHSLEVSQ…MELADDIAYA (192 aa)).

Belongs to the dGTPase family. Type 2 subfamily.

The chain is Deoxyguanosinetriphosphate triphosphohydrolase-like protein from Shewanella woodyi (strain ATCC 51908 / MS32).